We begin with the raw amino-acid sequence, 652 residues long: DNA ligase (652 aa).

NAD(+)-binding positions include 29 to 33, 78 to 79, and Glu-107; these read DAEYD and SL. The N6-AMP-lysine intermediate role is filled by Lys-109. The NAD(+) site is built by Arg-130, Glu-164, Lys-278, and Lys-302. Residues Cys-395, Cys-398, Cys-413, and Cys-418 each coordinate Zn(2+). A BRCT domain is found at 577–652; sequence ASDAALTGMT…IKDEAWLESL (76 aa).

The protein belongs to the NAD-dependent DNA ligase family. LigA subfamily. Mg(2+) serves as cofactor. The cofactor is Mn(2+).

It carries out the reaction NAD(+) + (deoxyribonucleotide)n-3'-hydroxyl + 5'-phospho-(deoxyribonucleotide)m = (deoxyribonucleotide)n+m + AMP + beta-nicotinamide D-nucleotide.. Its function is as follows. DNA ligase that catalyzes the formation of phosphodiester linkages between 5'-phosphoryl and 3'-hydroxyl groups in double-stranded DNA using NAD as a coenzyme and as the energy source for the reaction. It is essential for DNA replication and repair of damaged DNA. This Streptococcus mutans serotype c (strain ATCC 700610 / UA159) protein is DNA ligase.